The following is a 450-amino-acid chain: Probable ECA polymerase (450 aa).

The next 11 membrane-spanning stretches (helical) occupy residues 6–26, 37–57, 63–83, 118–138, 155–175, 181–201, 207–227, 228–248, 341–361, 378–398, and 410–430; these read FSGLFVVWLLCTLFIATLTWF, VFFSLLFLLTFFFGFPLTSVL, VGVAPPEILLQALLSAGCFYA, VILMGIALVSVGIFFMHNGFL, GVALKRFFYFFIPAMLVVYFL, AWLFFLVSTVAFGLLTYMIVG, IIIAFAIFLFIGIIRGWISLW, MLAAAGVLGIVGMFWLALKRY, LVVMGGALFIPLGAIVVGLII, YKAAILHSFCFGAIFNMIVLA, and VFFIVVFGACLMIAKLLYWLF.

This sequence belongs to the WzyE family. Probably part of a complex composed of WzxE, WzyE and WzzE.

It localises to the cell inner membrane. It functions in the pathway bacterial outer membrane biogenesis; enterobacterial common antigen biosynthesis. Its function is as follows. Probably involved in the polymerization of enterobacterial common antigen (ECA) trisaccharide repeat units. The protein is Probable ECA polymerase of Shigella boydii serotype 18 (strain CDC 3083-94 / BS512).